Here is a 151-residue protein sequence, read N- to C-terminus: MKLMQIGVIGAGECDEETYRIAYRVGELIAEKGHVLINGGLGGVMEASAKGAKSKGGLVVAILPRKKDLCNDFADIRIATDMGHARNVIIVHSSDALISVGGGYGTISEIAIALKEGKRVASLKPPVVIEGMRVFETPEEAVNYCISSSVK.

This is an uncharacterized protein from Archaeoglobus fulgidus (strain ATCC 49558 / DSM 4304 / JCM 9628 / NBRC 100126 / VC-16).